Here is a 260-residue protein sequence, read N- to C-terminus: Glutamate racemase (260 aa).

Residues 7–8 and 39–40 each bind substrate; these read DS and YG. The Proton donor/acceptor role is filled by Cys-71. 72–73 contributes to the substrate binding site; that stretch reads NT. The active-site Proton donor/acceptor is Cys-182. 183–184 provides a ligand contact to substrate; the sequence is TH.

It belongs to the aspartate/glutamate racemases family.

The enzyme catalyses L-glutamate = D-glutamate. The protein operates within cell wall biogenesis; peptidoglycan biosynthesis. Provides the (R)-glutamate required for cell wall biosynthesis. The protein is Glutamate racemase of Sulfurihydrogenibium sp. (strain YO3AOP1).